The primary structure comprises 431 residues: Histidinol dehydrogenase (431 aa).

Residues Tyr127, Gln189, and Asn212 each contribute to the NAD(+) site. 3 residues coordinate substrate: Ser237, Gln259, and His262. Residues Gln259 and His262 each coordinate Zn(2+). Residues Glu326 and His327 each act as proton acceptor in the active site. Substrate contacts are provided by His327, Asp360, Glu414, and His419. Asp360 serves as a coordination point for Zn(2+). His419 serves as a coordination point for Zn(2+).

The protein belongs to the histidinol dehydrogenase family. It depends on Zn(2+) as a cofactor.

The catalysed reaction is L-histidinol + 2 NAD(+) + H2O = L-histidine + 2 NADH + 3 H(+). Its pathway is amino-acid biosynthesis; L-histidine biosynthesis; L-histidine from 5-phospho-alpha-D-ribose 1-diphosphate: step 9/9. Functionally, catalyzes the sequential NAD-dependent oxidations of L-histidinol to L-histidinaldehyde and then to L-histidine. This Xanthomonas oryzae pv. oryzae (strain KACC10331 / KXO85) protein is Histidinol dehydrogenase.